An 808-amino-acid polypeptide reads, in one-letter code: MSEIEEKFNESSYGADSIKVLKGLEAVRKRPGMYIGDVGDGSGLHHMIYEVVDNAIDESLAGYCDLVRVTLNKNGSVTVSDNGRGIPVEIHQEEGISAAEVIMTQLHAGGKFDQNSYKVSGGLHGVGVSVVNALSEWLELRIWRNNKEYLIRFNNGITEAPLAVVNEDINKKGTEVTFFPSVETFTNIEFDFGTIEHRLRELAFLNSGVKILLVDNRFEEAKEVEFYYTGGIEAYVKYIDRAKHAVHPCIVVNTENTESGISLELAMHWNDSYHENILCFTNNIRQRDGGTHLSAFKSAITRVITSYLDTTGLNKKSKNDFSGEDTREGLCCVLSVKVPDPKFSSQTKDKLVSSEVRPVVENAVYTKVLEWFEEHPAESKAIIAKIMEAANAREAARKARELTRRKSALEVSNLPGKLADCHAKDPAISELFIVEGDSAGGTAKQGRDSKIQAILPLRGKILNVERARFDKMLGSDQIGTLITALGTGVDNREFSLEKLRYHKVIIMTDADVDGSHIRTLLLTFFYRHMPELINKGYLYIAQPPLYKVKKGAAEFYLKNEQALQDYLIKSTINDATLTLDGKEQLVGDNLEELINKVVKFNGLLDHASKKFNRSITEILAINDLLNNKIFELESDSRLQKALDVLNSLEESPDKTNWEVLKHENKVEFFRFSRGLKESKILLKEQLESFEFVQISKLALTIFDIFDKQLKLIVKSQEFGILTASQLLNAIIECGKRGISIQRFKGLGEMNSNQLWETTLDPAKRTLLQVRVAEVDEAEGIFSTLMGDVVEPRRLFIQANALNVVNLDV.

Residues 429-544 (SELFIVEGDS…KGYLYIAQPP (116 aa)) form the Toprim domain. Mg(2+)-binding residues include Glu435, Asp509, and Asp511.

This sequence belongs to the type II topoisomerase GyrB family. Heterotetramer, composed of two GyrA and two GyrB chains. In the heterotetramer, GyrA contains the active site tyrosine that forms a transient covalent intermediate with DNA, while GyrB binds cofactors and catalyzes ATP hydrolysis. Requires Mg(2+) as cofactor. Mn(2+) serves as cofactor. The cofactor is Ca(2+).

Its subcellular location is the cytoplasm. The enzyme catalyses ATP-dependent breakage, passage and rejoining of double-stranded DNA.. Functionally, a type II topoisomerase that negatively supercoils closed circular double-stranded (ds) DNA in an ATP-dependent manner to modulate DNA topology and maintain chromosomes in an underwound state. Negative supercoiling favors strand separation, and DNA replication, transcription, recombination and repair, all of which involve strand separation. Also able to catalyze the interconversion of other topological isomers of dsDNA rings, including catenanes and knotted rings. Type II topoisomerases break and join 2 DNA strands simultaneously in an ATP-dependent manner. The sequence is that of DNA gyrase subunit B from Rickettsia felis (strain ATCC VR-1525 / URRWXCal2) (Rickettsia azadi).